A 287-amino-acid chain; its full sequence is Large ribosomal subunit protein uL2 (287 aa).

The tract at residues 221-287 (RGSVMNPCDH…SKRSRGGRDS (67 aa)) is disordered. The segment covering 271–287 (LRKRRKTSKRSRGGRDS) has biased composition (basic residues).

This sequence belongs to the universal ribosomal protein uL2 family. Part of the 50S ribosomal subunit. Forms a bridge to the 30S subunit in the 70S ribosome.

One of the primary rRNA binding proteins. Required for association of the 30S and 50S subunits to form the 70S ribosome, for tRNA binding and peptide bond formation. It has been suggested to have peptidyltransferase activity; this is somewhat controversial. Makes several contacts with the 16S rRNA in the 70S ribosome. The chain is Large ribosomal subunit protein uL2 from Synechococcus sp. (strain CC9605).